The sequence spans 208 residues: Ribosomal RNA large subunit methyltransferase E (208 aa).

Residues Gly-62, Trp-64, Asp-82, Asp-98, and Asp-123 each contribute to the S-adenosyl-L-methionine site. Catalysis depends on Lys-163, which acts as the Proton acceptor.

The protein belongs to the class I-like SAM-binding methyltransferase superfamily. RNA methyltransferase RlmE family.

The protein resides in the cytoplasm. It catalyses the reaction uridine(2552) in 23S rRNA + S-adenosyl-L-methionine = 2'-O-methyluridine(2552) in 23S rRNA + S-adenosyl-L-homocysteine + H(+). Specifically methylates the uridine in position 2552 of 23S rRNA at the 2'-O position of the ribose in the fully assembled 50S ribosomal subunit. The protein is Ribosomal RNA large subunit methyltransferase E of Mannheimia succiniciproducens (strain KCTC 0769BP / MBEL55E).